The primary structure comprises 525 residues: GMP synthase [glutamine-hydrolyzing] (525 aa).

The Glutamine amidotransferase type-1 domain maps to 9–207; that stretch reads RILILDFGSQ…VVDICKCEKL (199 aa). Catalysis depends on Cys86, which acts as the Nucleophile. Active-site residues include His181 and Glu183. A GMPS ATP-PPase domain is found at 208 to 400; sequence WTSASIIDDA…LGLPYDMLYR (193 aa). Position 235-241 (235-241) interacts with ATP; it reads SGGVDSS.

Homodimer.

The enzyme catalyses XMP + L-glutamine + ATP + H2O = GMP + L-glutamate + AMP + diphosphate + 2 H(+). It participates in purine metabolism; GMP biosynthesis; GMP from XMP (L-Gln route): step 1/1. Its function is as follows. Catalyzes the synthesis of GMP from XMP. This chain is GMP synthase [glutamine-hydrolyzing], found in Colwellia psychrerythraea (strain 34H / ATCC BAA-681) (Vibrio psychroerythus).